The primary structure comprises 529 residues: Mannuronan C5-epimerase (529 aa).

Residues 1-30 (MGACAMNPQALKGSAMLAAAMLLASGAAMA) form the signal peptide. PbH1 repeat units follow at residues 229 to 256 (GTET…SISQ), 291 to 313 (TTGF…DPHD), 315 to 338 (SHGL…IISR), 340 to 362 (VNDS…VLDR), 364 to 386 (SVNN…TLYE), and 387 to 409 (SGDN…RVRN). The Proton acceptor role is filled by His312.

Belongs to the D-mannuronate C5-epimerase family.

Its subcellular location is the periplasm. It carries out the reaction [(1-&gt;4)-beta-D-mannuronosyl](n) = [alginate](n). Its pathway is glycan biosynthesis; alginate biosynthesis. Functionally, catalyzes the epimerization of beta-D-mannuronate to alpha-L-guluronate during the synthesis of the linear polysaccharide alginate. In addition, is part of a periplasmic protein complex that protects alginate from degradation by AlgL by channeling the newly formed alginate polymer through a scaffold that transfers the alginate polymer through the periplasmic space to the outer membrane secretin AlgE. The polypeptide is Mannuronan C5-epimerase (Pseudomonas fluorescens).